Consider the following 136-residue polypeptide: ATP synthase epsilon chain (136 aa).

This sequence belongs to the ATPase epsilon chain family. F-type ATPases have 2 components, CF(1) - the catalytic core - and CF(0) - the membrane proton channel. CF(1) has five subunits: alpha(3), beta(3), gamma(1), delta(1), epsilon(1). CF(0) has three main subunits: a, b and c.

It is found in the cell membrane. Functionally, produces ATP from ADP in the presence of a proton gradient across the membrane. In Ureaplasma urealyticum serovar 10 (strain ATCC 33699 / Western), this protein is ATP synthase epsilon chain.